The chain runs to 303 residues: Probable cell division protein WhiA (303 aa).

Residues 272-303 (SIQQVADALEFPITKSGVNHRLRKINKIADDL) constitute a DNA-binding region (H-T-H motif).

The protein belongs to the WhiA family.

Functionally, involved in cell division and chromosome segregation. This Streptococcus pyogenes serotype M1 protein is Probable cell division protein WhiA.